Here is a 312-residue protein sequence, read N- to C-terminus: R2-like ligand binding oxidase (312 aa).

The Mn(2+) site is built by E68, E101, and H104. The segment at residues 71–162 is a cross-link (3-(O4'-tyrosyl)-valine (Val-Tyr)); the sequence is VTQDIQPFMA…AAQVRASVTY (92 aa). E101 lines the Fe cation pocket. Residues E167, E202, and H205 each contribute to the Fe cation site.

Belongs to the ribonucleoside diphosphate reductase small chain family. R2-like ligand binding oxidase subfamily. In terms of assembly, homodimer. Fe cation serves as cofactor. The cofactor is Mn(2+).

Probable oxidase that might be involved in lipid metabolism. In Mycolicibacterium vanbaalenii (strain DSM 7251 / JCM 13017 / BCRC 16820 / KCTC 9966 / NRRL B-24157 / PYR-1) (Mycobacterium vanbaalenii), this protein is R2-like ligand binding oxidase.